The primary structure comprises 666 residues: Long chain acyl-CoA synthetase 4 (666 aa).

228–239 contributes to the ATP binding site; that stretch reads IMYTSGTTGDPK. Positions 495–519 are fatty acid-binding; that stretch reads DGWLHTGDVGEWQPDGSMKIIDRKK.

Belongs to the ATP-dependent AMP-binding enzyme family. The cofactor is Mg(2+).

It carries out the reaction a long-chain fatty acid + ATP + CoA = a long-chain fatty acyl-CoA + AMP + diphosphate. It participates in lipid metabolism; fatty acid metabolism. Its function is as follows. Activation of long-chain fatty acids for both synthesis of cellular lipids, and degradation via beta-oxidation. Preferentially uses palmitate, palmitoleate, oleate and linoleate. This chain is Long chain acyl-CoA synthetase 4 (LACS4), found in Arabidopsis thaliana (Mouse-ear cress).